The primary structure comprises 333 residues: Ig gamma-2B chain C region (333 aa).

Ig-like domains lie at 6-96, 124-223, and 232-328; these read PSVY…KKVE, PSVF…KTIS, and PQVY…KSIS. Cystine bridges form between C27–C80, C147–C207, and C253–C311.

The protein is Ig gamma-2B chain C region (Igh-1a) of Rattus norvegicus (Rat).